Consider the following 242-residue polypeptide: HTH domain-truncated transcriptional regulator QseD (242 aa).

It belongs to the LysR transcriptional regulatory family.

Functionally, represses EHEC virulence expression. Down-regulates expression of LEE (locus of enterocyte effacement) and iraD genes, and alters AE (attaching and effacing) lesion formation. May regulate transcription through interactions with another HTH DNA-binding protein. This is HTH domain-truncated transcriptional regulator QseD (qseD) from Escherichia coli O157:H7.